The following is a 349-amino-acid chain: Protein-glutamate methylesterase/protein-glutamine glutaminase (349 aa).

The Response regulatory domain maps to 5–122; sequence RVLCVDDSAL…REGMLAYSEL (118 aa). Aspartate 56 is modified (4-aspartylphosphate). In terms of domain architecture, CheB-type methylesterase spans 152–344; it reads LLSSEKLIAI…QRMLAQISSG (193 aa). Residues serine 164, histidine 190, and aspartate 286 contribute to the active site.

The protein belongs to the CheB family. In terms of processing, phosphorylated by CheA. Phosphorylation of the N-terminal regulatory domain activates the methylesterase activity.

Its subcellular location is the cytoplasm. It catalyses the reaction [protein]-L-glutamate 5-O-methyl ester + H2O = L-glutamyl-[protein] + methanol + H(+). The enzyme catalyses L-glutaminyl-[protein] + H2O = L-glutamyl-[protein] + NH4(+). Its function is as follows. Involved in chemotaxis. Part of a chemotaxis signal transduction system that modulates chemotaxis in response to various stimuli. Catalyzes the demethylation of specific methylglutamate residues introduced into the chemoreceptors (methyl-accepting chemotaxis proteins or MCP) by CheR. Also mediates the irreversible deamidation of specific glutamine residues to glutamic acid. This is Protein-glutamate methylesterase/protein-glutamine glutaminase from Yersinia pestis bv. Antiqua (strain Antiqua).